The primary structure comprises 499 residues: Cysteine--tRNA ligase (499 aa).

Position 29 (C29) interacts with Zn(2+). Positions 31–41 (VTVYDLCHLGH) match the 'HIGH' region motif. Zn(2+) contacts are provided by C213, H238, and E242. Residues 270–274 (KMSKS) carry the 'KMSKS' region motif. Residue K273 participates in ATP binding.

The protein belongs to the class-I aminoacyl-tRNA synthetase family. In terms of assembly, monomer. It depends on Zn(2+) as a cofactor.

It is found in the cytoplasm. The catalysed reaction is tRNA(Cys) + L-cysteine + ATP = L-cysteinyl-tRNA(Cys) + AMP + diphosphate. This chain is Cysteine--tRNA ligase, found in Synechococcus sp. (strain CC9902).